The following is an 856-amino-acid chain: DNA mismatch repair protein MutS (856 aa).

607 to 614 contributes to the ATP binding site; it reads GPNMSGKS.

It belongs to the DNA mismatch repair MutS family.

Its function is as follows. This protein is involved in the repair of mismatches in DNA. It is possible that it carries out the mismatch recognition step. This protein has a weak ATPase activity. The protein is DNA mismatch repair protein MutS of Lactobacillus delbrueckii subsp. bulgaricus (strain ATCC 11842 / DSM 20081 / BCRC 10696 / JCM 1002 / NBRC 13953 / NCIMB 11778 / NCTC 12712 / WDCM 00102 / Lb 14).